A 106-amino-acid polypeptide reads, in one-letter code: Biogenesis of lysosome-related organelles complex 1 subunit BLS1 (106 aa).

This sequence belongs to the BLOC1S1 family. Component of the biogenesis of lysosome-related organelles complex-1 (BLOC-1).

It localises to the endosome. Functionally, component of the biogenesis of lysosome-related organelles complex-1 (BLOC-1), a complex involved in endosomal cargo sorting. This chain is Biogenesis of lysosome-related organelles complex 1 subunit BLS1 (BLS1), found in Candida glabrata (strain ATCC 2001 / BCRC 20586 / JCM 3761 / NBRC 0622 / NRRL Y-65 / CBS 138) (Yeast).